The sequence spans 177 residues: Ribonuclease clavin (177 aa).

The first 27 residues, 1-27 (MVAIKNLVLVALTAVTALAMPSPLEER), serve as a signal peptide directing secretion. Intrachain disulfides connect cysteine 33–cysteine 175 and cysteine 103–cysteine 159. Histidine 77 is an active-site residue. The tract at residues 98–117 (WGNSDCDRPPKHSKNGDGKN) is disordered. The span at 102–117 (DCDRPPKHSKNGDGKN) shows a compositional bias: basic and acidic residues. The active-site Proton acceptor is glutamate 123. Residue histidine 164 is the Proton donor of the active site.

This sequence belongs to the ribonuclease U2 family.

The protein localises to the secreted. Clavin has the same substrate specificity as alpha-sarcin. It is specific for purines in both single- and double-stranded RNA. Its toxic action on eukaryotic cells is the result of cleavage of a single phosphodiester bond in the 60S subunit of ribosomes. This chain is Ribonuclease clavin (cla), found in Aspergillus clavatus (strain ATCC 1007 / CBS 513.65 / DSM 816 / NCTC 3887 / NRRL 1 / QM 1276 / 107).